A 714-amino-acid polypeptide reads, in one-letter code: Macrophage-expressed gene 1 protein (714 aa).

An N-terminal signal peptide occupies residues 1-19 (MNSFMAIALIWMMIACAEA). Residues 30–345 (GFQTCKDTLK…TAVRHYYTFN (316 aa)) enclose the MACPF domain. A disulfide bond links C34 and C70. The next 2 beta stranded transmembrane spans lie at 113–120 (FSINTELS) and 127–132 (GKFSTE). A glycan (N-linked (GlcNAc...) asparagine) is linked at N185. 2 beta stranded membrane-spanning segments follow: residues 235-244 (TVTASAGIAF) and 248-256 (VNFKVETDH). N-linked (GlcNAc...) asparagine glycosylation is present at N269. An intrachain disulfide couples C350 to C369. N375 carries N-linked (GlcNAc...) asparagine glycosylation. 5 disulfide bridges follow: C385–C394, C432–C446, C436–C442, C531–C569, and C554–C574. Residues 410 to 653 (PSGYTPVHLL…GDGNGMSGGE (244 aa)) are P2. A helical transmembrane segment spans residues 654–674 (AAGVTLGVIIALGIVITLAIY). A disordered region spans residues 690–714 (EQESLVGSFATDASPPNGEQDPCPA).

This sequence belongs to the MPEG1 family. Homooligomer; predominantly forms a homooligomeric arc-shaped pore complex instead of complete rings of 16 subunits. Proteolytically processed in two steps to generate the Macrophage-expressed gene 1 protein, processed form: cleaved by trypsin in proximity of the helical transmembrane domain releases the ectodomain into the lysosomal lumen to orient the pore-forming domain toward the endogenous membranes, and processed by the asparagine endopeptidase (LGMN). Proteolytic processing in antigen-containing vesicles is pH-dependent. Post-translationally, monoubiquitinated in response to bacterial infection; ubiquitination is required for vesicular localization and antibacterial activity and can be blocked by bacterial cell cycle inhibiting factor (cif).

It is found in the cytoplasmic vesicle membrane. It localises to the cytoplasmic vesicle. The protein resides in the phagosome membrane. With respect to regulation, forms arc- and ring-shaped pre-pores on top of the membrane at neutral to slightly acidic pH conditions and converts to pores upon acidification. Undergoes transition from the pre-pore to the pore in a processive clockwise hand-over-hand process. In the pore state, 2 alpha-helical regions refold into transmembrane hairpins (TMH1 and TMH2) in each protomer that form in the ensemble complex giant beta-barrel transmembrane pores. In terms of biological role, pore-forming protein involved in both innate and adaptive immunity. Plays a central role in antigen cross-presentation in dendritic cells by forming a pore in antigen-containing compartments, thereby promoting delivery of antigens for cross-presentation. Also involved in innate immune response following bacterial infection; shows antibacterial activity against a wide spectrum of Gram-positive, Gram-negative and acid-fast bacteria. Reduces the viability of the intracytosolic pathogen L.monocytogenes by inhibiting acidification of the phagocytic vacuole of host cells which restricts bacterial translocation from the vacuole to the cytosol. Required for the antibacterial activity of reactive oxygen species and nitric oxide. Functionally, pore-forming protein that plays a central role in antigen cross-presentation in dendritic cells by mediating delivery of antigens for cross-presentation. Dendritic cells bridge innate and adaptive immunity by capturing exogenous antigens on MHC class-I molecules and presenting them to naive CD8(+) T-cells. Acts by forming a pore in antigen-containing compartments, promoting the release of antigens into the cytosol, enabling generation of MHCI:peptide complexes and T-cell priming. This is Macrophage-expressed gene 1 protein (Mpeg1) from Rattus norvegicus (Rat).